The chain runs to 869 residues: MAADVEGDVYVLVEHPFEYTGKDGRLIAIQPNERCRLLRRSTEHWWHVRREPGGRPFYLPAQYVRELPALGDPVPAPQPSVLQQRPTVPEPLAYDYRFVSTPVGADGSSAEPRGRASSLCGPARQRTSGQRNSLAPGGPACLYLRPAAPVRPAQSLDDLARGGTAPPAGLLGSAGHFKASSVAGSWVCPRPLARSDSENVYEAIPDLRCPPRAKSPKQVDEPPEPVYANVERQPQVTSPRSAAAPPRLSPVWETHTDAGTGRPYYYNPDTGVTTWESPFEAPEGATSPTTSRASVGSGESLETEWGQYWDEESGRVFFYNPLTGETVWEDETEELEDDPEEQLEMQPSLSPRSPGQQRPPTPETDYPELLTSYPEEDYSPVGSFSDLGPTSPLVAPPGWSCQITPEKQMLYTNQFTQEQWVRLEDQEGKPYFYNPEDSSVQWELPQVPVPAPRSGRKSSQDSDTPAQASPPEEKIKTLDKAGVLHRTKTVDKGKRLRKKHWNASWTVLEGGVLTFFKDSKTSAASGLRQPSKLSTPEYTVELRGASLSWAPKDKSSKKNVLELRSRDGSEYLIQHDSEAIISTWHKAIAEGIEELSADLPQREEGEPSSADFGSSERLGSWKEEDVRPNAASPSLNPGSQESDLSRVRHKLRKFLQRRPTLQSLREKGYIKDQVFGCALAQLCERERSPVPRFVQQCIRTVEARGLDIDGLYRISGNLATIQKLRYKVDHDERLDLDDGRWEDVHVITGALKLFFRELPEPLFPFSHFHQFIAAIKLQDPAQRSRCVRDLVRTLPAPNHDTLRLLIQHLCRVIEHGEQNRMSVQNVAIVFGPTLLRPEMEEASMPMTMVFQNQVVELILHQCADIFPPH.

The 64-residue stretch at Glu6 to Ala69 folds into the SH3 domain. The segment at Gly104–Gly137 is disordered. Residues Ser155, Ser215, and Ser249 each carry the phosphoserine modification. WW domains follow at residues Pro246–Glu280 and Glu299–Glu333. Disordered stretches follow at residues Trp275–Glu299, Glu331–Pro389, and Val447–Lys474. Residues Glu331–Leu343 show a composition bias toward acidic residues. Over residues Met345–Gln356 the composition is skewed to polar residues. Ser350 bears the Phosphoserine mark. Residues Gln414–Val447 enclose the WW 3 domain. Residues Ser459 and Ser462 each carry the phosphoserine modification. Thr464 bears the Phosphothreonine mark. Ser469 is subject to Phosphoserine. The PH domain maps to Thr477–Glu593. The segment at Asp598 to Leu644 is disordered. A compositionally biased stretch (polar residues) spans Ala631–Ser642. Ser632 is modified (phosphoserine). A Rho-GAP domain is found at Cys677–Phe866.

Interacts with SH3KBP1/CIN85.

The protein localises to the cytoplasm. Its subcellular location is the membrane. Functionally, rho GTPase-activating protein which may be involved in clathrin-mediated endocytosis. GTPase activators for the Rho-type GTPases act by converting them to an inactive GDP-bound state. Has activity toward CDC42 and RAC1. The sequence is that of Rho GTPase-activating protein 27 (Arhgap27) from Rattus norvegicus (Rat).